A 443-amino-acid polypeptide reads, in one-letter code: F-box only protein 39 (443 aa).

Residues 13–59 form the F-box domain; that stretch reads QSCWATLPDVCLRRVFWWLGDRDRSRAALVCRKWNQIMYSADLWRYR.

In terms of assembly, directly interacts with SKP1 and CUL1.

In terms of biological role, substrate-recognition component of the SCF (SKP1-CUL1-F-box protein)-type E3 ubiquitin ligase complex. This is F-box only protein 39 (Fbxo39) from Mus musculus (Mouse).